An 84-amino-acid chain; its full sequence is MVKLRLKRYGRKQQNTYRIVAIDAQSRREGRALEEVGFYNLRKDQTQLDILAIVNLIREGAQPTETVYDILRKAGIFERIKANP.

It belongs to the bacterial ribosomal protein bS16 family.

Its subcellular location is the plastid. The protein resides in the chloroplast. This Anthoceros angustus (Hornwort) protein is Small ribosomal subunit protein bS16c.